The chain runs to 534 residues: MQRISINVSGIRRFCITSLSSSSASNLTDHGMLKQVLESCKAPSNSKCVLQAHAQIFKLGYGTYPSLLVSTVAAYRRCNRSYLARRLLLWFLSLSPGVCNINLIIESLMKIGESGLAKKVLRNASDQNVITWNLMIGGYVRNVQYEEALKALKNMLSFTDIKPNKFSFASSLAACARLGDLHHAKWVHSLMIDSGIELNAILSSALVDVYAKCGDIGTSREVFYSVKRNDVSIWNAMITGFATHGLATEAIRVFSEMEAEHVSPDSITFLGLLTTCSHCGLLEEGKEYFGLMSRRFSIQPKLEHYGAMVDLLGRAGRVKEAYELIESMPIEPDVVIWRSLLSSSRTYKNPELGEIAIQNLSKAKSGDYVLLSNIYSSTKKWESAQKVRELMSKEGIRKAKGKSWLEFGGMIHRFKAGDTSHIETKAIYKVLEGLIQKTKSQGFVSDTDLVLMDVSEEEKEENLNYHSEKLALAYVILKSSPGTEIRIQKNIRMCSDCHNWIKAVSKLLNRVIIMRDRIRFHRFEDGLCSCRDYW.

PPR repeat units lie at residues 128–158 (NVIT…MLSF), 164–198 (NKFS…GIEL), 199–229 (NAIL…VKRN), 230–264 (DVSI…HVSP), 265–295 (DSIT…MSRR), and 301–331 (KLEH…MPIE). A type E motif region spans residues 336 to 408 (IWRSLLSSSR…AKGKSWLEFG (73 aa)). Residues 409-439 (GMIHRFKAGDTSHIETKAIYKVLEGLIQKTK) form a type E(+) motif region. The type DYW motif stretch occupies residues 440 to 534 (SQGFVSDTDL…DGLCSCRDYW (95 aa)).

It belongs to the PPR family. PCMP-H subfamily.

The protein is Pentatricopeptide repeat-containing protein At5g50990 (PCMP-H59) of Arabidopsis thaliana (Mouse-ear cress).